Consider the following 87-residue polypeptide: Phosphocarrier protein HPr (87 aa).

One can recognise an HPr domain in the interval 1–87 (MEKIFKVTSD…ETMKNEGLGE (87 aa)). Histidine 14 (pros-phosphohistidine intermediate; alternate) is an active-site residue. Histidine 14 carries the tele-phosphohistidine; alternate modification. Serine 45 is modified (phosphoserine; by HPrK/P).

It belongs to the HPr family. Post-translationally, the form phosphorylated at the tele nitrogen (N(epsilon)2), instead of the expected pros nitrogen (N(delta)1), of His-14 is not able to transfer its phosphoryl group to the B.subtilis EIIA-Glc domain. This form may be inactive in PTS-catalyzed sugar transport or target an as yet unknown acceptor molecule in an alternative metabolic process.

It localises to the cytoplasm. Phosphorylation on Ser-45 inhibits the phosphoryl transfer from enzyme I to HPr. Its function is as follows. General (non sugar-specific) component of the phosphoenolpyruvate-dependent sugar phosphotransferase system (sugar PTS). This major carbohydrate active-transport system catalyzes the phosphorylation of incoming sugar substrates concomitantly with their translocation across the cell membrane. The phosphoryl group from phosphoenolpyruvate (PEP) is transferred to the phosphoryl carrier protein HPr by enzyme I. Phospho-HPr then transfers it to the PTS EIIA domain. In terms of biological role, P-Ser-HPr interacts with the catabolite control protein A (CcpA), forming a complex that binds to DNA at the catabolite response elements cre, operator sites preceding a large number of catabolite-regulated genes. Thus, P-Ser-HPr is a corepressor in carbon catabolite repression (CCR), a mechanism that allows bacteria to coordinate and optimize the utilization of available carbon sources. P-Ser-HPr mediates glucose catabolite repression of cry4A toxin expression. The protein is Phosphocarrier protein HPr (ptsH) of Bacillus thuringiensis subsp. israelensis.